The sequence spans 149 residues: Arginine repressor (149 aa).

It belongs to the ArgR family.

It is found in the cytoplasm. It functions in the pathway amino-acid biosynthesis; L-arginine biosynthesis [regulation]. In terms of biological role, regulates arginine biosynthesis genes. The chain is Arginine repressor from Bacillus mycoides (strain KBAB4) (Bacillus weihenstephanensis).